The primary structure comprises 127 residues: Small ribosomal subunit protein uS11 (127 aa).

Belongs to the universal ribosomal protein uS11 family. In terms of assembly, part of the 30S ribosomal subunit. Interacts with proteins S7 and S18. Binds to IF-3.

In terms of biological role, located on the platform of the 30S subunit, it bridges several disparate RNA helices of the 16S rRNA. Forms part of the Shine-Dalgarno cleft in the 70S ribosome. This Rickettsia felis (strain ATCC VR-1525 / URRWXCal2) (Rickettsia azadi) protein is Small ribosomal subunit protein uS11.